A 362-amino-acid chain; its full sequence is Tryptophan 2,3-dioxygenase (362 aa).

Substrate contacts are provided by residues 40 to 44 (FIIVH) and R111. H297 is a binding site for heme. T311 is a substrate binding site.

The protein belongs to the tryptophan 2,3-dioxygenase family. Homotetramer. The cofactor is heme.

It catalyses the reaction L-tryptophan + O2 = N-formyl-L-kynurenine. Its pathway is amino-acid degradation; L-tryptophan degradation via kynurenine pathway; L-kynurenine from L-tryptophan: step 1/2. Functionally, heme-dependent dioxygenase that catalyzes the oxidative cleavage of the L-tryptophan (L-Trp) pyrrole ring and converts L-tryptophan to N-formyl-L-kynurenine. Catalyzes the oxidative cleavage of the indole moiety. The polypeptide is Tryptophan 2,3-dioxygenase (Alteromonas mediterranea (strain DSM 17117 / CIP 110805 / LMG 28347 / Deep ecotype)).